The primary structure comprises 113 residues: UPF0482 protein YnfB (113 aa).

Positions 1–28 are cleaved as a signal peptide; the sequence is MNYTLSKRLCLTAMLTLAAVVYTTSAFA.

It belongs to the UPF0482 family.

This is UPF0482 protein YnfB from Salmonella arizonae (strain ATCC BAA-731 / CDC346-86 / RSK2980).